Consider the following 456-residue polypeptide: Chromosomal replication initiator protein DnaA (456 aa).

The tract at residues 1–83 (MKLKILHFTS…DAFEEESNNG (83 aa)) is domain I, interacts with DnaA modulators. Residues 83-116 (GVRPEIHIKVKEKKENVKSLKNNKSMLYFNTNGL) are domain II. The segment at 117–331 (SLNPFYTFEN…GILSTINAHI (215 aa)) is domain III, AAA+ region. 4 residues coordinate ATP: glycine 161, glycine 163, lysine 164, and threonine 165. Residues 332 to 456 (NLSPESSSLK…SKIQQSLDSV (125 aa)) are domain IV, binds dsDNA.

The protein belongs to the DnaA family. In terms of assembly, oligomerizes as a right-handed, spiral filament on DNA at oriC.

It is found in the cytoplasm. Plays an essential role in the initiation and regulation of chromosomal replication. ATP-DnaA binds to the origin of replication (oriC) to initiate formation of the DNA replication initiation complex once per cell cycle. Binds the DnaA box (a 9 base pair repeat at the origin) and separates the double-stranded (ds)DNA. Forms a right-handed helical filament on oriC DNA; dsDNA binds to the exterior of the filament while single-stranded (ss)DNA is stabiized in the filament's interior. The ATP-DnaA-oriC complex binds and stabilizes one strand of the AT-rich DNA unwinding element (DUE), permitting loading of DNA polymerase. After initiation quickly degrades to an ADP-DnaA complex that is not apt for DNA replication. Binds acidic phospholipids. This is Chromosomal replication initiator protein DnaA from Helicobacter hepaticus (strain ATCC 51449 / 3B1).